Consider the following 306-residue polypeptide: MTNLPKFSTALLHPRYWLTWLGIGVLWLVVQLPYPVIYRLGCGLGKLALRFMKRRAKIVHRNLELCFPEMSEQERRKMVVKNFESVGMGLMETGMAWFWPDRRIARWTEVIGMEHIRDVQAQKRGILLVGIHFLTLELGARQFGMQEPGIGVYRPNDNPLIDWLQTWGRLRSNKSMLDRKDLKGMIKALKKGEVVWYAPDHDYGPRSSVFVPLFAVEQAATTTGTWMLARMSGACLVPFVPRRKPDGKGYQLIMLPPECSPPLDDAETTAAWMNKVVEKCIMMAPEQYMWLHRRFKTRPEGVPSRY.

The helical transmembrane segment at 17 to 37 (WLTWLGIGVLWLVVQLPYPVI) threads the bilayer. Residues 132–137 (HFLTLE) carry the HXXXXD motif motif.

The protein belongs to the LpxL/LpxM/LpxP family. As to quaternary structure, monomer.

Its subcellular location is the cell inner membrane. The catalysed reaction is dodecanoyl-[ACP] + alpha-Kdo-(2-&gt;4)-alpha-Kdo-(2-&gt;6)-lipid IVA (E. coli) = alpha-Kdo-(2-&gt;4)-alpha-Kdo-(2-&gt;6)-(dodecanoyl)-lipid IVA (E. coli) + holo-[ACP]. It participates in glycolipid biosynthesis; KDO(2)-lipid A biosynthesis; KDO(2)-lipid A from CMP-3-deoxy-D-manno-octulosonate and lipid IV(A): step 3/4. The protein operates within bacterial outer membrane biogenesis; lipopolysaccharide biosynthesis. Its function is as follows. Catalyzes the transfer of laurate from lauroyl-[acyl-carrier-protein] (ACP) to Kdo(2)-lipid IV(A) to form Kdo(2)-(lauroyl)-lipid IV(A). Has 10 fold selectivity for lauroyl-ACP over myristoyl-ACP. In vitro, can also catalyze a slow second acylation reaction leading to the formation of Kdo(2)-(dilauroyl)-lipid IV(A). The polypeptide is Lipid A biosynthesis lauroyltransferase (Escherichia coli (strain K12)).